The primary structure comprises 1021 residues: INO80 complex subunit D (1021 aa).

Residue K87 forms a Glycyl lysine isopeptide (Lys-Gly) (interchain with G-Cter in SUMO2) linkage. A Phosphoserine modification is found at S132. 5 disordered regions span residues 194–239, 514–570, 808–844, 911–940, and 976–1021; these read FSTP…PMQG, RGDN…SMPT, RQQYSSDHSHSSPHGSHYDSEHVPSPYSDHITSPHTS, SLSTPPTTSNSETTQPAFATVTPSSSSVLP, and QLSS…PSPN. Polar residues predominate over residues 224–239; sequence VCKSPQPQNTSLPMQG. Over residues 520–554 the composition is skewed to basic residues; sequence KVQHQQQRKPRKKTKPPALTKKHKKKRRRGPRRPQ. Residues 911–926 show a composition bias toward low complexity; sequence SLSTPPTTSNSETTQP. Positions 931-940 are enriched in polar residues; that stretch reads VTPSSSSVLP. Residues 995 to 1014 are compositionally biased toward low complexity; that stretch reads APPTGFTATGATATSTNNAS.

This sequence belongs to the INO80D family. In terms of assembly, component of the chromatin remodeling INO80 complex; specifically part of a complex module associated with the N-terminus of INO80.

It localises to the nucleus. In terms of biological role, putative regulatory component of the chromatin remodeling INO80 complex which is involved in transcriptional regulation, DNA replication and probably DNA repair. The sequence is that of INO80 complex subunit D from Mus musculus (Mouse).